A 154-amino-acid polypeptide reads, in one-letter code: Protein X (154 aa).

Positions 68–117 (PCALRFTSARRMETTVNAHQFLPKVLHKRTLGLSVMSTTDLEAYFKDCLF) are mitochondrial targeting sequence.

Belongs to the orthohepadnavirus protein X family. As to quaternary structure, may form homodimer. May interact with host CEBPA, CFLAR, CREB1, DDB1, E4F1, HBXIP, HSPD1/HSP60, NFKBIA, POLR2E and SMAD4. Interacts with host SMC5-SMC6 complex and induces its degradation. Interacts with host TRPC4AP; leading to prevent ubiquitination of TRPC4AP. Interacts with host PLSCR1; this interaction promotes ubiquitination and degradation of HBx and impairs HBx-mediated cell proliferation. In terms of processing, a fraction may be phosphorylated in insect cells and HepG2 cells, a human hepatoblastoma cell line. Phosphorylated in vitro by host protein kinase C or mitogen-activated protein kinase. N-acetylated in insect cells.

The protein localises to the host cytoplasm. The protein resides in the host nucleus. It is found in the host mitochondrion. Its function is as follows. Multifunctional protein that plays a role in silencing host antiviral defenses and promoting viral transcription. Does not seem to be essential for HBV infection. May be directly involved in development of cirrhosis and liver cancer (hepatocellular carcinoma). Most of cytosolic activities involve modulation of cytosolic calcium. The effect on apoptosis is controversial depending on the cell types in which the studies have been conducted. May induce apoptosis by localizing in mitochondria and causing loss of mitochondrial membrane potential. May also modulate apoptosis by binding host CFLAR, a key regulator of the death-inducing signaling complex (DISC). Promotes viral transcription by using the host E3 ubiquitin ligase DDB1 to target the SMC5-SMC6 complex to proteasomal degradation. This host complex would otherwise bind to viral episomal DNA, and prevents its transcription. Moderately stimulates transcription of many different viral and cellular transcription elements. Promoters and enhancers stimulated by HBx contain DNA binding sites for NF-kappa-B, AP-1, AP-2, c-EBP, ATF/CREB, or the calcium-activated factor NF-AT. This chain is Protein X, found in Hepatitis B virus genotype D (isolate France/alpha1/1989) (HBV-D).